The sequence spans 410 residues: BRCA1-A complex subunit Abraxas 1 (410 aa).

An MPN domain is found at 7-160 (TAVLSGFVLG…HALYKPQKGL (154 aa)). Phosphoserine is present on Ser-48. The stretch at 208–261 (SLKEVQKINEMYTSLQDELKSICEKVEHSERAVEKLLNDVNRLKGEIKKRKQAQ) forms a coiled coil. Residues 354-410 (DGWQFKKSRLGGIQNRPSKTDTNSSNQEQASTVSSPETDEEIERMKGSGEYPQSPTF) are disordered. The span at 368-389 (NRPSKTDTNSSNQEQASTVSSP) shows a compositional bias: polar residues. Ser-387 and Ser-388 each carry phosphoserine. At Thr-391 the chain carries Phosphothreonine. A Phosphoserine modification is found at Ser-407. The short motif at 407 to 410 (SPTF) is the pSXXF motif element.

The protein belongs to the FAM175 family. Abraxas subfamily. In terms of assembly, component of the ARISC complex, at least composed of UIMC1/RAP80, ABRAXAS1, BRCC3/BRCC36, BABAM2 and BABAM1/NBA1. Component of the BRCA1-A complex, at least composed of the BRCA1, BARD1, UIMC1/RAP80, ABRAXAS1, BRCC3/BRCC36, BABAM2 and BABAM1/NBA1. In the complex, interacts directly with UIMC1/RAP80, BRCC3/BRCC36 and BABAM2. Homodimer. Interacts directly (when phosphorylated at Ser-407) with BRCA1. The phosphorylated homodimer can interact directly with two BRCA1 chains, giving rise to a heterotetramer. Binds polyubiquitin. Post-translationally, phosphorylation of Ser-407 of the pSXXF motif by ATM or ATR constitutes a specific recognition motif for the BRCT domain of BRCA1.

It is found in the nucleus. Its function is as follows. Involved in DNA damage response and double-strand break (DSB) repair. Component of the BRCA1-A complex, acting as a central scaffold protein that assembles the various components of the complex and mediates the recruitment of BRCA1. The BRCA1-A complex specifically recognizes 'Lys-63'-linked ubiquitinated histones H2A and H2AX at DNA lesion sites, leading to target the BRCA1-BARD1 heterodimer to sites of DNA damage at DSBs. This complex also possesses deubiquitinase activity that specifically removes 'Lys-63'-linked ubiquitin on histones H2A and H2AX. This Bos taurus (Bovine) protein is BRCA1-A complex subunit Abraxas 1.